A 421-amino-acid polypeptide reads, in one-letter code: NADH-quinone oxidoreductase subunit F (421 aa).

The disordered stretch occupies residues 1–25 (MLKEEDKIFTNLHGQQSHDLKSSKK). The span at 16–25 (QSHDLKSSKK) shows a compositional bias: basic and acidic residues. 54 to 63 (GRGGAGFSTG) lines the NAD(+) pocket. 166 to 213 (GAGAYICGEETALLESLEGKKGMPRLKPPFPAGFGLYGCPTTINNVES) contacts FMN. 4 residues coordinate [4Fe-4S] cluster: cysteine 344, cysteine 347, cysteine 350, and cysteine 390.

It belongs to the complex I 51 kDa subunit family. It depends on FMN as a cofactor. [4Fe-4S] cluster serves as cofactor.

The enzyme catalyses a quinone + NADH + 5 H(+)(in) = a quinol + NAD(+) + 4 H(+)(out). NDH-1 shuttles electrons from NADH, via FMN and iron-sulfur (Fe-S) centers, to quinones in the respiratory chain. Couples the redox reaction to proton translocation (for every two electrons transferred, four hydrogen ions are translocated across the cytoplasmic membrane), and thus conserves the redox energy in a proton gradient. This is NADH-quinone oxidoreductase subunit F (nuoF) from Rickettsia massiliae (strain Mtu5).